We begin with the raw amino-acid sequence, 251 residues long: Triosephosphate isomerase (251 aa).

Asparagine 9–lysine 11 contributes to the substrate binding site. Residue histidine 95 is the Electrophile of the active site. Glutamate 167 serves as the catalytic Proton acceptor. Residues glycine 173, serine 213, and glycine 234 to glycine 235 each bind substrate. Serine 213 carries the post-translational modification Phosphoserine.

It belongs to the triosephosphate isomerase family. Homodimer.

It localises to the cytoplasm. It catalyses the reaction D-glyceraldehyde 3-phosphate = dihydroxyacetone phosphate. Its pathway is carbohydrate biosynthesis; gluconeogenesis. The protein operates within carbohydrate degradation; glycolysis; D-glyceraldehyde 3-phosphate from glycerone phosphate: step 1/1. Functionally, involved in the gluconeogenesis. Catalyzes stereospecifically the conversion of dihydroxyacetone phosphate (DHAP) to D-glyceraldehyde-3-phosphate (G3P). In Shouchella clausii (strain KSM-K16) (Alkalihalobacillus clausii), this protein is Triosephosphate isomerase.